We begin with the raw amino-acid sequence, 152 residues long: Acyl carrier protein, mitochondrial (152 aa).

One can recognise a Carrier domain in the interval 73 to 148 (KLINERVLLV…DIIKYVADKE (76 aa)). The residue at position 108 (Ser108) is an O-(pantetheine 4'-phosphoryl)serine.

The protein belongs to the acyl carrier protein (ACP) family. In terms of assembly, complex I is composed of about 45 different subunits.

The protein localises to the mitochondrion. Functionally, carrier of the growing fatty acid chain in fatty acid biosynthesis. Accessory and non-catalytic subunit of the mitochondrial membrane respiratory chain NADH dehydrogenase (Complex I), which functions in the transfer of electrons from NADH to the respiratory chain. This Drosophila melanogaster (Fruit fly) protein is Acyl carrier protein, mitochondrial.